We begin with the raw amino-acid sequence, 1020 residues long: X-linked retinitis pigmentosa GTPase regulator (1020 aa).

RCC1 repeat units follow at residues 54–105 (NKLY…STEG), 106–158 (GNVY…LTED), 159–208 (GRLF…VTTD), 209–261 (GELY…LTEN), 262–313 (AVYT…ITDI), and 314–367 (GLMY…FAAP). A phosphoserine mark is found at Ser-418 and Ser-518. 3 disordered regions span residues 609 to 776 (HENN…IISK), 790 to 906 (EIPE…KEKA), and 989 to 1020 (DNKD…CTIL). 8 stretches are compositionally biased toward basic and acidic residues: residues 618–636 (LDAK…QKES), 644–665 (EKET…EKST), 685–698 (EENK…ESCK), 704–715 (DSERESVEKPDS), 760–771 (KLIEQGNEKETK), 790–802 (EIPE…EDSK), 816–853 (ENVK…LKLE), and 883–906 (SKTE…KEKA). Residues 996–1009 (NHMSQNHQNIPPTN) are compositionally biased toward polar residues. The residue at position 1017 (Cys-1017) is a Cysteine methyl ester. Cys-1017 is lipidated: S-geranylgeranyl cysteine. A propeptide spans 1018-1020 (TIL) (removed in mature form).

In terms of assembly, interacts with SPATA7. Interacts with CEP290. Interacts with WHRN. Interacts with PDE6D. Interacts with RPGRIP1. Interacts with RPGRIP1L. PDE6D, RPGRIP1 and RPGRIP1L may compete for the same binding sites. Interacts with RAB37 and RAB8A (in GDP-bound forms); functions as GEF for RAB37 and RAB8A. As to quaternary structure, isoform 6 interacts with NPM1 (via C-terminus). Isoform 6 interacts with SMC1A and SMC3. Prenylated. In terms of tissue distribution, heart, brain, placenta, lung, liver, muscle, kidney, retina, pancreas and fetal retinal pigment epithelium. Isoform 3 is found only in the retina. Colocalizes with RPGRIP1 in the outer segment of rod photoreceptors and cone outer segments.

The protein localises to the cytoplasm. It is found in the cytoskeleton. Its subcellular location is the flagellum axoneme. The protein resides in the golgi apparatus. It localises to the cell projection. The protein localises to the cilium. It is found in the microtubule organizing center. Its subcellular location is the centrosome. The protein resides in the cilium basal body. It localises to the cilium axoneme. Its function is as follows. Acts as a guanine-nucleotide releasing factor (GEF) for RAB8A and RAB37 by promoting the conversion of inactive RAB-GDP to the active form RAB-GTP. GEF activity towards RAB8A may facilitate ciliary trafficking by modulating ciliary intracellular localization of RAB8A. GEF activity towards RAB37 maintains autophagic homeostasis and retinal function. Involved in photoreceptor integrity. May control cilia formation by regulating actin stress filaments and cell contractility. May be involved in microtubule organization and regulation of transport in primary cilia. May play a critical role in spermatogenesis and in intraflagellar transport processes. The protein is X-linked retinitis pigmentosa GTPase regulator of Homo sapiens (Human).